The following is a 359-amino-acid chain: uncharacterized protein (359 aa).

Low complexity predominate over residues Ala73–Ala88. The interval Ala73–Ala93 is disordered. Residues Pro179–Glu354 form the Macro domain.

This is an uncharacterized protein from Mycobacterium tuberculosis (strain ATCC 25618 / H37Rv).